The primary structure comprises 217 residues: MRAVLLGAPGSGKGTQGERLSQQYGIPQVSTGDLLRAAVAAGSELGKQAKAAMDAGELVSDQIVIGIIRERLTQPDAAKGYILDGFPRNFTQAQALDEMLATLERPLQAIILLDVNFEVLMRRLTGRRTCQACGAIYNIYFSPPEVDHRCDKCNSDQLVQRSDDNEETISNRLRVYEAQTAPLVDYYEAQGKLYKVDGEDDITKIAKNIGQILETAR.

10 to 15 (GSGKGT) serves as a coordination point for ATP. An NMP region spans residues 30-59 (STGDLLRAAVAAGSELGKQAKAAMDAGELV). AMP contacts are provided by residues Thr-31, Arg-36, 57–59 (ELV), 85–88 (GFPR), and Gln-92. The segment at 126–164 (GRRTCQACGAIYNIYFSPPEVDHRCDKCNSDQLVQRSDD) is LID. Position 127 (Arg-127) interacts with ATP. The Zn(2+) site is built by Cys-130 and Cys-133. 136–137 (IY) contributes to the ATP binding site. Zn(2+) is bound by residues Cys-150 and Cys-153. Arg-161 and Arg-172 together coordinate AMP. Asp-200 is a binding site for ATP.

Belongs to the adenylate kinase family. Monomer.

Its subcellular location is the cytoplasm. The catalysed reaction is AMP + ATP = 2 ADP. It participates in purine metabolism; AMP biosynthesis via salvage pathway; AMP from ADP: step 1/1. Its function is as follows. Catalyzes the reversible transfer of the terminal phosphate group between ATP and AMP. Plays an important role in cellular energy homeostasis and in adenine nucleotide metabolism. This Nitrosococcus oceani (strain ATCC 19707 / BCRC 17464 / JCM 30415 / NCIMB 11848 / C-107) protein is Adenylate kinase.